Reading from the N-terminus, the 84-residue chain is Small ribosomal subunit protein uS17c (84 aa).

It belongs to the universal ribosomal protein uS17 family. Part of the 30S ribosomal subunit.

It localises to the plastid. The protein resides in the chloroplast. Its function is as follows. One of the primary rRNA binding proteins, it binds specifically to the 5'-end of 16S ribosomal RNA. In Trieres chinensis (Marine centric diatom), this protein is Small ribosomal subunit protein uS17c (rps17).